A 700-amino-acid polypeptide reads, in one-letter code: Elongation factor G (700 aa).

One can recognise a tr-type G domain in the interval 8–290 (DRYRNVGIMA…AMIMYMPSPL (283 aa)). GTP is bound by residues 17–24 (AHIDAGKT), 88–92 (DTPGH), and 142–145 (NKMD).

Belongs to the TRAFAC class translation factor GTPase superfamily. Classic translation factor GTPase family. EF-G/EF-2 subfamily.

Its subcellular location is the cytoplasm. Functionally, catalyzes the GTP-dependent ribosomal translocation step during translation elongation. During this step, the ribosome changes from the pre-translocational (PRE) to the post-translocational (POST) state as the newly formed A-site-bound peptidyl-tRNA and P-site-bound deacylated tRNA move to the P and E sites, respectively. Catalyzes the coordinated movement of the two tRNA molecules, the mRNA and conformational changes in the ribosome. This chain is Elongation factor G, found in Vesicomyosocius okutanii subsp. Calyptogena okutanii (strain HA).